Reading from the N-terminus, the 109-residue chain is Iron-sulfur cluster assembly protein CyaY (109 aa).

This sequence belongs to the frataxin family.

Functionally, involved in iron-sulfur (Fe-S) cluster assembly. May act as a regulator of Fe-S biogenesis. The chain is Iron-sulfur cluster assembly protein CyaY from Acidovorax ebreus (strain TPSY) (Diaphorobacter sp. (strain TPSY)).